The sequence spans 347 residues: uncharacterized protein (347 aa).

Residues 1-44 (MWNPKKKSEALAKFKSFPYPKPGTSNVLDSKEGDTRRKYFTKTH) lie on the Cytoplasmic side of the membrane. The chain crosses the membrane as a helical; Signal-anchor for type II membrane protein span at residues 45–62 (LHRLFVFVVLLLCSGYFL). Topologically, residues 63–347 (KHTLLTRPKE…RGWRKLVPFL (285 aa)) are lumenal.

Belongs to the glycosyltransferase 34 family.

It is found in the endoplasmic reticulum membrane. This is an uncharacterized protein from Schizosaccharomyces pombe (strain 972 / ATCC 24843) (Fission yeast).